An 86-amino-acid chain; its full sequence is Small ribosomal subunit protein bS20 (86 aa).

Residues Met-1–Met-22 are disordered.

Belongs to the bacterial ribosomal protein bS20 family.

Its function is as follows. Binds directly to 16S ribosomal RNA. In Thioalkalivibrio sulfidiphilus (strain HL-EbGR7), this protein is Small ribosomal subunit protein bS20.